A 590-amino-acid chain; its full sequence is Asparagine synthetase [glutamine-hydrolyzing] (590 aa).

The active-site For GATase activity is the C2. The Glutamine amidotransferase type-2 domain maps to 2-185 (CGILAVLGCS…PGNLYSSRSG (184 aa)). L-glutamine-binding positions include 50–54 (RLAII), 75–77 (NGE), and D98. In terms of domain architecture, Asparagine synthetase spans 193 to 516 (PQWYNETIPS…PQNSARFTVP (324 aa)). Residues L231, V267, and 341 to 342 (SG) contribute to the ATP site.

It catalyses the reaction L-aspartate + L-glutamine + ATP + H2O = L-asparagine + L-glutamate + AMP + diphosphate + H(+). It functions in the pathway amino-acid biosynthesis; L-asparagine biosynthesis; L-asparagine from L-aspartate (L-Gln route): step 1/1. The polypeptide is Asparagine synthetase [glutamine-hydrolyzing] (Asparagus officinalis (Garden asparagus)).